The following is a 204-amino-acid chain: Small ribosomal subunit protein uS4 (204 aa).

Residues 93–156 (SRLSSVLYHS…AKIPVIVEAV (64 aa)) enclose the S4 RNA-binding domain.

Belongs to the universal ribosomal protein uS4 family. Part of the 30S ribosomal subunit. Contacts protein S5. The interaction surface between S4 and S5 is involved in control of translational fidelity.

Functionally, one of the primary rRNA binding proteins, it binds directly to 16S rRNA where it nucleates assembly of the body of the 30S subunit. Its function is as follows. With S5 and S12 plays an important role in translational accuracy. This chain is Small ribosomal subunit protein uS4, found in Wolbachia sp. subsp. Brugia malayi (strain TRS).